The sequence spans 360 residues: Actin-like protein MamK (360 aa).

Residues K22, 33–34 (TS), and D89 contribute to the ATP site. E156 is a binding site for Mg(2+). Residues 177–179 (AGT), 231–235 (KEQFS), and G302 contribute to the ATP site.

It belongs to the FtsA/MreB family. MamK subfamily. As to quaternary structure, forms cytoplasmic filaments. Interacts with MamJ. Forms filaments in the absence of other magnetosome proteins and in E.coli. Filament formation in vitro requires ATP, GTP or a non-hydrolyzable ATP analog.

It is found in the cytoplasm. It localises to the cytoskeleton. The enzyme catalyses ATP + H2O = ADP + phosphate + H(+). Filament dynamics depend partially on MamJ. In terms of biological role, protein with ATPase activity which forms dynamic cytoplasmic filaments that are involved in sorting, concatenating and/or correctly positioning of magnetosomes in the cell. Not absolutely necessary for assembly of short chains. Filaments grow from the both cell poles towards midcell, and are probably disassembled at the other end of the cell, a process known as treadmilling. Polymerizes in the presence of ATP, GTP or a non-hydrolyzable ATP analog. Required for correct segregation and positioning of magnetosomes following cell division. The polypeptide is Actin-like protein MamK (Magnetospirillum gryphiswaldense (strain DSM 6361 / JCM 21280 / NBRC 15271 / MSR-1)).